Here is a 946-residue protein sequence, read N- to C-terminus: Bifunctional glutamine synthetase adenylyltransferase/adenylyl-removing enzyme (946 aa).

The segment at 1-440 (MKPLSSPLQQ…VFNELIGDDE (440 aa)) is adenylyl removase. Residues 449-946 (SEQWRELWQD…ASWQKWLVEE (498 aa)) are adenylyl transferase.

The protein belongs to the GlnE family. Mg(2+) is required as a cofactor.

It carries out the reaction [glutamine synthetase]-O(4)-(5'-adenylyl)-L-tyrosine + phosphate = [glutamine synthetase]-L-tyrosine + ADP. The catalysed reaction is [glutamine synthetase]-L-tyrosine + ATP = [glutamine synthetase]-O(4)-(5'-adenylyl)-L-tyrosine + diphosphate. Functionally, involved in the regulation of glutamine synthetase GlnA, a key enzyme in the process to assimilate ammonia. When cellular nitrogen levels are high, the C-terminal adenylyl transferase (AT) inactivates GlnA by covalent transfer of an adenylyl group from ATP to specific tyrosine residue of GlnA, thus reducing its activity. Conversely, when nitrogen levels are low, the N-terminal adenylyl removase (AR) activates GlnA by removing the adenylyl group by phosphorolysis, increasing its activity. The regulatory region of GlnE binds the signal transduction protein PII (GlnB) which indicates the nitrogen status of the cell. The polypeptide is Bifunctional glutamine synthetase adenylyltransferase/adenylyl-removing enzyme (Escherichia coli (strain K12 / MC4100 / BW2952)).